We begin with the raw amino-acid sequence, 192 residues long: Phosphoheptose isomerase (192 aa).

Residues 37–192 (LADSFKAGGK…IQLIEKEMVK (156 aa)) enclose the SIS domain. Substrate is bound at residue 52–54 (NGG). Zn(2+) contacts are provided by H61 and E65. Residues E65, 93 to 94 (ND), 119 to 121 (STS), S124, and Q172 contribute to the substrate site. The Zn(2+) site is built by Q172 and H180.

This sequence belongs to the SIS family. GmhA subfamily. As to quaternary structure, homotetramer. Zn(2+) is required as a cofactor.

It is found in the cytoplasm. It catalyses the reaction 2 D-sedoheptulose 7-phosphate = D-glycero-alpha-D-manno-heptose 7-phosphate + D-glycero-beta-D-manno-heptose 7-phosphate. It functions in the pathway carbohydrate biosynthesis; D-glycero-D-manno-heptose 7-phosphate biosynthesis; D-glycero-alpha-D-manno-heptose 7-phosphate and D-glycero-beta-D-manno-heptose 7-phosphate from sedoheptulose 7-phosphate: step 1/1. Functionally, catalyzes the isomerization of sedoheptulose 7-phosphate in D-glycero-D-manno-heptose 7-phosphate. The protein is Phosphoheptose isomerase of Escherichia coli O139:H28 (strain E24377A / ETEC).